A 68-amino-acid chain; its full sequence is Tabimmunregulin 12 (68 aa).

Positions 1-24 (MLFKSYVYFLAGLLLVGLFTSCDA) are cleaved as a signal peptide. Residues 25–38 (DAQYEELVPGFFRK) constitute a propeptide that is removed on maturation.

In terms of tissue distribution, expressed in salivary glands.

It is found in the secreted. Functionally, horsefly salivary gland immunosuppressant protein that likely inhibits the host inflammatory response by regulation of anti- and pro-inflammatory cytokines. When tested on mouse splenocytes in the presence of LPS, it increases the secretion of the proinflammatory cytokine interleukin-10 (IL10) and decreases the secretion of the proinflammatory cytokine interferon-gamma (IFNG) in a dose-dependent manner. This is Tabimmunregulin 12 from Tabanus yao (Horsefly).